The sequence spans 57 residues: Small ribosomal subunit protein bS21 (57 aa).

This sequence belongs to the bacterial ribosomal protein bS21 family.

The protein is Small ribosomal subunit protein bS21 of Bacillus cytotoxicus (strain DSM 22905 / CIP 110041 / 391-98 / NVH 391-98).